Consider the following 152-residue polypeptide: UPF0756 membrane protein JDM1_1594 (152 aa).

4 helical membrane passes run 25–45, 52–72, 85–105, and 115–135; these read ATVV…LTTI, WGVT…QIGF, WIAV…VGLL, and LVFG…GPII.

This sequence belongs to the UPF0756 family.

It localises to the cell membrane. This is UPF0756 membrane protein JDM1_1594 from Lactiplantibacillus plantarum (strain JDM1) (Lactobacillus plantarum).